A 104-amino-acid chain; its full sequence is QPKATPSVTLFPPSSEELKTDKATLVCMVTDFYPGVMTVVWKADGTPITQGVETTQPFKQNNKYMATSYLLLTAKAWETHSNYSCQVTHEENTVEKSLSRAECS.

Residues 6–99 (PSVTLFPPSS…EENTVEKSLS (94 aa)) form the Ig-like domain. C27 and C85 are oxidised to a cystine.

The polypeptide is Ig lambda-1 chain C region (Rattus norvegicus (Rat)).